Consider the following 200-residue polypeptide: Polyadenylate-binding protein 1-like 2 (200 aa).

RRM domains follow at residues alanine 2–arginine 80 and glycine 90–serine 166. Residues arginine 170 to arginine 200 form a disordered region. Residues aspartate 188–arginine 200 are compositionally biased toward acidic residues.

The chain is Polyadenylate-binding protein 1-like 2 (PABPC1L2A) from Homo sapiens (Human).